A 353-amino-acid polypeptide reads, in one-letter code: Polyprenal reductase 2 (353 aa).

The next 6 membrane-spanning stretches (helical) occupy residues 11-31, 78-98, 175-195, 234-254, 291-308, and 313-335; these read PLLC…ALPI, FMHF…AIWF, MHIV…LSLA, PLLK…WGSL, YLAE…SGAE, and WFLF…NWYL.

The protein belongs to the steroid 5-alpha reductase family. Polyprenal reductase subfamily.

It is found in the cell membrane. The catalysed reaction is a di-trans,poly-cis-dolichal + NADP(+) = a di-trans,poly-cis-polyprenal + NADPH + H(+). It functions in the pathway protein modification; protein glycosylation. In terms of biological role, plays a key role in early steps of protein N-linked glycosylation by being involved in the conversion of polyprenol into dolichol. Acts as a polyprenal reductase that mediates the reduction of polyprenal into dolichal in a NADP-dependent mechanism. Dolichols are required for the synthesis of dolichol-linked monosaccharides and the oligosaccharide precursor used for N-glycosylation. In Oryza sativa subsp. japonica (Rice), this protein is Polyprenal reductase 2.